The chain runs to 161 residues: Phosphopantetheine adenylyltransferase (161 aa).

Serine 8 contributes to the substrate binding site. Residues 8-9 (SF) and histidine 16 contribute to the ATP site. Residues lysine 40, threonine 72, and arginine 86 each contribute to the substrate site. ATP is bound by residues 87 to 89 (GLR), glutamate 97, and 122 to 128 (HSFLSSS).

This sequence belongs to the bacterial CoaD family. Homohexamer. It depends on Mg(2+) as a cofactor.

The protein resides in the cytoplasm. The catalysed reaction is (R)-4'-phosphopantetheine + ATP + H(+) = 3'-dephospho-CoA + diphosphate. It participates in cofactor biosynthesis; coenzyme A biosynthesis; CoA from (R)-pantothenate: step 4/5. Functionally, reversibly transfers an adenylyl group from ATP to 4'-phosphopantetheine, yielding dephospho-CoA (dPCoA) and pyrophosphate. This is Phosphopantetheine adenylyltransferase from Gloeobacter violaceus (strain ATCC 29082 / PCC 7421).